A 544-amino-acid polypeptide reads, in one-letter code: Putative ligase Rv1013 (544 aa).

Lys528 is covalently cross-linked (Isoglutamyl lysine isopeptide (Lys-Gln) (interchain with Q-Cter in protein Pup)).

Belongs to the ATP-dependent AMP-binding enzyme family. Pupylated at Lys-528 by the prokaryotic ubiquitin-like protein Pup, which probably leads to its degradation by the proteasome.

The protein is Putative ligase Rv1013 (pks16) of Mycobacterium tuberculosis (strain ATCC 25618 / H37Rv).